The chain runs to 1204 residues: Integrator complex subunit 2 (1204 aa).

Residues 428 to 444 form a helical membrane-spanning segment; sequence FVSLSFCMLLAFSTLVS.

This sequence belongs to the Integrator subunit 2 family. As to quaternary structure, component of the Integrator complex, composed of core subunits INTS1, INTS2, INTS3, INTS4, INTS5, INTS6, INTS7, INTS8, INTS9/RC74, INTS10, INTS11/CPSF3L, INTS12, INTS13, INTS14 and INTS15. The core complex associates with protein phosphatase 2A subunits PPP2CA and PPP2R1A, to form the Integrator-PP2A (INTAC) complex.

It localises to the nucleus. The protein localises to the nucleus membrane. The protein resides in the cytoplasm. Functionally, component of the integrator complex, a multiprotein complex that terminates RNA polymerase II (Pol II) transcription in the promoter-proximal region of genes. The integrator complex provides a quality checkpoint during transcription elongation by driving premature transcription termination of transcripts that are unfavorably configured for transcriptional elongation: the complex terminates transcription by (1) catalyzing dephosphorylation of the C-terminal domain (CTD) of Pol II subunit POLR2A/RPB1 and SUPT5H/SPT5, (2) degrading the exiting nascent RNA transcript via endonuclease activity and (3) promoting the release of Pol II from bound DNA. The integrator complex is also involved in terminating the synthesis of non-coding Pol II transcripts, such as enhancer RNAs (eRNAs), small nuclear RNAs (snRNAs), telomerase RNAs and long non-coding RNAs (lncRNAs). Mediates recruitment of cytoplasmic dynein to the nuclear envelope, probably as component of the integrator complex. This is Integrator complex subunit 2 from Homo sapiens (Human).